Reading from the N-terminus, the 79-residue chain is Potassium channel toxin Hge-beta-KTx (79 aa).

A signal peptide spans 1-21; it reads MAKSFFAAFLIIMLISSLVDG. Residues 48-79 form the BetaSPN-type CS-alpha/beta domain; that stretch reads EYMCPVVSSFCKQHCARLGKSGQCDLLECICS. Disulfide bonds link Cys51-Cys71, Cys58-Cys76, and Cys62-Cys78.

As to expression, expressed by the venom gland.

It is found in the secreted. Its function is as follows. The full peptide presents antibacterial and cytotoxic activities. The synthetic C-terminus (AA 33-76) inhibits voltage-gated potassium channels Kv1.1/KCNA1, Kv1.2/KCNA2, and Kv1.3/KCNA3. In Hoffmannihadrurus gertschi (Scorpion), this protein is Potassium channel toxin Hge-beta-KTx.